Consider the following 424-residue polypeptide: Enolase (424 aa).

Glutamine 162 serves as a coordination point for (2R)-2-phosphoglycerate. Glutamate 204 acts as the Proton donor in catalysis. 3 residues coordinate Mg(2+): aspartate 241, glutamate 284, and aspartate 311. (2R)-2-phosphoglycerate is bound by residues lysine 336, arginine 365, serine 366, and lysine 387. Lysine 336 acts as the Proton acceptor in catalysis.

The protein belongs to the enolase family. Mg(2+) is required as a cofactor.

The protein localises to the cytoplasm. Its subcellular location is the secreted. It is found in the cell surface. It catalyses the reaction (2R)-2-phosphoglycerate = phosphoenolpyruvate + H2O. It participates in carbohydrate degradation; glycolysis; pyruvate from D-glyceraldehyde 3-phosphate: step 4/5. Functionally, catalyzes the reversible conversion of 2-phosphoglycerate (2-PG) into phosphoenolpyruvate (PEP). It is essential for the degradation of carbohydrates via glycolysis. The polypeptide is Enolase (Rhizobium meliloti (strain 1021) (Ensifer meliloti)).